A 187-amino-acid polypeptide reads, in one-letter code: NAC domain-containing protein 104 (187 aa).

One can recognise an NAC domain in the interval leucine 3–glutamine 155. A DNA-binding region spans residues valine 94–glutamate 161. The segment at leucine 118–proline 142 is disordered.

As to expression, expressed in root xylem vessels. Expressed in stems, vascular tissue of cauline leaves and tracheary elements of sepals.

The protein localises to the nucleus. Probable transcription factor that influences tracheary elements and xylem development by negatively regulating secondary cell wall fiber synthesis and programmed cell death. This Arabidopsis thaliana (Mouse-ear cress) protein is NAC domain-containing protein 104.